We begin with the raw amino-acid sequence, 539 residues long: Phosphoenolpyruvate carboxykinase (ATP) (539 aa).

Positions 64, 206, and 212 each coordinate substrate. ATP contacts are provided by residues K212, H231, and 247–255 (GLSGTGKTT). The Mn(2+) site is built by K212 and H231. D268 serves as a coordination point for Mn(2+). ATP contacts are provided by residues E296, R332, 448-449 (RI), and T454. R332 is a binding site for substrate.

It belongs to the phosphoenolpyruvate carboxykinase (ATP) family. In terms of assembly, monomer. The cofactor is Mn(2+).

It is found in the cytoplasm. The catalysed reaction is oxaloacetate + ATP = phosphoenolpyruvate + ADP + CO2. It participates in carbohydrate biosynthesis; gluconeogenesis. Involved in the gluconeogenesis. Catalyzes the conversion of oxaloacetate (OAA) to phosphoenolpyruvate (PEP) through direct phosphoryl transfer between the nucleoside triphosphate and OAA. The protein is Phosphoenolpyruvate carboxykinase (ATP) of Yersinia pestis bv. Antiqua (strain Antiqua).